The following is a 202-amino-acid chain: Casparian strip membrane protein 4 (202 aa).

Residues 1–40 (MKSDSIAVDVPAESSSAIKGKAPLLGLARDHTGSGGYKRG) lie on the Cytoplasmic side of the membrane. A helical membrane pass occupies residues 41–61 (LSIFDFLLRLAAIVAALAAAA). Topologically, residues 62-90 (TMGTSDETLPFFTQFLQFEASYDDLPTFQ) are extracellular. Residues 91–111 (FFVVAIAIVTGYLVLSLPFSV) form a helical membrane-spanning segment. Over 112-130 (VTIVRPLAVAPRLLLLVLD) the chain is Cytoplasmic. The helical transmembrane segment at 131–151 (TAALALDTAAASAAAAIVYLA) threads the bilayer. Residues 152 to 176 (HNGNTNTNWLPICQQFGDFCQKTSG) are Extracellular-facing. A helical membrane pass occupies residues 177 to 197 (AVVSAFASVTFLAILVVISGV). The Cytoplasmic portion of the chain corresponds to 198–202 (SLKRP).

Belongs to the Casparian strip membrane proteins (CASP) family. As to quaternary structure, homodimer and heterodimers.

It is found in the cell membrane. Its function is as follows. Regulates membrane-cell wall junctions and localized cell wall deposition. Required for establishment of the Casparian strip membrane domain (CSD) and the subsequent formation of Casparian strips, a cell wall modification of the root endodermis that determines an apoplastic barrier between the intraorganismal apoplasm and the extraorganismal apoplasm and prevents lateral diffusion. In Arabidopsis lyrata subsp. lyrata (Lyre-leaved rock-cress), this protein is Casparian strip membrane protein 4.